Here is a 630-residue protein sequence, read N- to C-terminus: MKYNAGTFDVIVVGAGHAGCEAALAAARMGAKTLMLTMTLDSIAMMPCNPSIGGTGKGHLVREIDAIGGEMGINTDKTFIQSRMLNTGKGPAVHSLRAQADKNKYHTEMKKTIENEPNLLLKQAEVVDLIIEDNTVKGVVTRSGASFYSHSVILATGVYLRGKIYIGEVNYESGPNGLFPSMHLSEKLTKLGCNMRRFKTGTPARIHQDSVDFSKMEEHLGDEEIVPFSFMNDGIEKKQVPCWLTRTTGETHRVIMENLNRSAMYRGDMESVGPRYCPSIEDKVVRFSDKPSHQIFIEPEGLDTKEMYVQGMSTSLPEEVQDAMLKTVIGLESAVIMRPAYAIEYDCIDPTQLKPTLEVKHIENLFSGGQFNGTSGYEEAAAQGLMAGINAVLKTKGEEPFVLDRSEAYIGVLIDDLVTKGTNEPYRMMTSRAEYRLILRQDNADMRLTEKSYKIGLASKERLERYLLKKSHIEEEITRLKKTNVSPEKANPILEENKSSLIKAGMSLYDLLKRPEVTYKVLKKIDENRNVDIVRDAQEQCEIIIKYEGYIEKQLRQIDQFKKLENKILPQEIDYHGIDGLRLEARQKLSDIQPMSVGQASRISGVSPSDISVLMIYLEQRRRQKNGGGT.

Residues 14–19 (GAGHAG), Val-126, and Ser-181 contribute to the FAD site. 273–287 (GPRYCPSIEDKVVRF) lines the NAD(+) pocket. Gln-370 contributes to the FAD binding site.

Belongs to the MnmG family. Homodimer. Heterotetramer of two MnmE and two MnmG subunits. It depends on FAD as a cofactor.

It is found in the cytoplasm. Its function is as follows. NAD-binding protein involved in the addition of a carboxymethylaminomethyl (cmnm) group at the wobble position (U34) of certain tRNAs, forming tRNA-cmnm(5)s(2)U34. The protein is tRNA uridine 5-carboxymethylaminomethyl modification enzyme MnmG of Alkaliphilus metalliredigens (strain QYMF).